Here is a 322-residue protein sequence, read N- to C-terminus: L-asparaginase (322 aa).

The region spanning 3-322 is the Asparaginase/glutaminase domain; sequence KKVALITTGG…KEGIKDKFCY (320 aa). T13 (O-isoaspartyl threonine intermediate) is an active-site residue. Substrate is bound by residues S56 and 89–90; that span reads TD.

The protein belongs to the asparaginase 1 family. In terms of assembly, homotetramer.

The protein localises to the cytoplasm. It catalyses the reaction L-asparagine + H2O = L-aspartate + NH4(+). This Bacillus licheniformis protein is L-asparaginase (ansA).